The primary structure comprises 380 residues: Probable inorganic pyrophosphatase (380 aa).

Asp198, Asp203, and Asp235 together coordinate Mg(2+).

It belongs to the PPase family. It depends on Mg(2+) as a cofactor.

The catalysed reaction is diphosphate + H2O = 2 phosphate + H(+). The polypeptide is Probable inorganic pyrophosphatase (Plasmodium falciparum (isolate 3D7)).